Consider the following 346-residue polypeptide: L-malyl-CoA/beta-methylmalyl-CoA lyase (346 aa).

Mg(2+) contacts are provided by Glu-148 and Asp-177. Residues 176–177 (VD) and 253–254 (LH) contribute to the substrate site.

It belongs to the HpcH/HpaI aldolase family. Requires Mg(2+) as cofactor. The cofactor is Mn(2+).

It carries out the reaction (S)-malyl-CoA = glyoxylate + acetyl-CoA. It catalyses the reaction (2R,3S)-beta-methylmalyl-CoA = propanoyl-CoA + glyoxylate. Involved in the methylaspartate cycle. Catalyzes the reversible cleavage of beta-methylmalyl-CoA to propionyl-CoA and glyoxylate, as well as the reversible cleavage of (S)-malyl-CoA to acetyl-CoA and glyoxylate. In addition, it has a small malyl-CoA thioesterase activity. It can also catalyze the cleavage of (S)-citramalyl-CoA to acetyl-CoA and pyruvate. This is L-malyl-CoA/beta-methylmalyl-CoA lyase (citE1) from Haloarcula marismortui (strain ATCC 43049 / DSM 3752 / JCM 8966 / VKM B-1809) (Halobacterium marismortui).